The following is a 451-amino-acid chain: PTS system galactose-specific EIIC component (451 aa).

Residues 8–427 (LNKTLMPLAS…VLNVLIYYPF (420 aa)) form the PTS EIIC type-3 domain. The next 11 membrane-spanning stretches (helical) occupy residues 40 to 60 (LGIALLTIIGYFPVPAWVDFL), 69 to 89 (FSAVIGAVTSALAIYVTYNFA), 104 to 124 (GLLSIASLLMLMPQIITVPVV), 151 to 171 (TGSTGLIVAIIIGFIVSLVYI), 190 to 210 (VVDSLSPAIISMVIFCLMFGI), 239 to 259 (ANPWVLMGIFTFGNFLWFFGI), 263 to 283 (LIGGILNPLLLTMSYANIDAY), 296 to 316 (IVFAVGANAWGGSGNTYGLVI), 332 to 352 (LGAIPSIFNISEPLLFGLPMM), 356 to 376 (LFFIPLVFQPAILGTVALGLA), and 403 to 423 (ISGGLPFLIIFAICLVLNVLI).

Its subcellular location is the cell membrane. In terms of biological role, the phosphoenolpyruvate-dependent sugar phosphotransferase system (PTS), a major carbohydrate active transport system, catalyzes the phosphorylation of incoming sugar substrates concomitant with their translocation across the cell membrane. Involved in galactose transport with PtcA and PtcB. The chain is PTS system galactose-specific EIIC component from Lactococcus lactis subsp. cremoris (strain MG1363).